A 391-amino-acid chain; its full sequence is Processive diacylglycerol beta-glucosyltransferase (391 aa).

Belongs to the glycosyltransferase 28 family. UgtP subfamily.

Its subcellular location is the cell membrane. It carries out the reaction a 1,2-diacyl-3-O-(beta-D-glucopyranosyl)-sn-glycerol + UDP-alpha-D-glucose = a 1,2-diacyl-3-O-(beta-D-Glc-(1-&gt;6)-beta-D-Glc)-sn-glycerol + UDP + H(+). The catalysed reaction is a 1,2-diacyl-sn-glycerol + UDP-alpha-D-glucose = a 1,2-diacyl-3-O-(beta-D-glucopyranosyl)-sn-glycerol + UDP + H(+). It participates in glycolipid metabolism; diglucosyl-diacylglycerol biosynthesis. Its function is as follows. Processive glucosyltransferase involved in the biosynthesis of both the bilayer- and non-bilayer-forming membrane glucolipids. Is able to successively transfer two glucosyl residues to diacylglycerol (DAG), thereby catalyzing the formation of beta-monoglucosyl-DAG (3-O-(beta-D-glucopyranosyl)-1,2-diacyl-sn-glycerol) and beta-diglucosyl-DAG (3-O-(beta-D-glucopyranosyl-beta-(1-&gt;6)-D-glucopyranosyl)-1,2-diacyl-sn-glycerol). Beta-diglucosyl-DAG is the predominant glycolipid found in Bacillales and is also used as a membrane anchor for lipoteichoic acid (LTA). This is Processive diacylglycerol beta-glucosyltransferase from Staphylococcus aureus (strain MW2).